Here is a 945-residue protein sequence, read N- to C-terminus: MLDKYSPAEIESKHYQNWESQGYFRPDMDLTKPSFSIQLPPPNVTGTLHMGHAFNQTIMDGLTRYYRMKGCNTAWIPGTDHAGIATQIVVERQLAAQNVSRHDLGREKFLEKVWEWKEVSGGTITQQMRRVGCSADWTREYFTMDGVRAETVTEVFVRLYEQGLIYRGKRLVNWDPVLGTAVSDLEVESMEEQGSMWHIRYPLADNPTEAVIVATTRPETLLGDAAVAVNPEDERYTHLIGKELILPLTGRTIPVIADEYVEKDFGTGCVKITPAHDFNDYEVGKRHDTRLINVFDLEAKVLANAEVFNFKGEAQPGFSLPEKYAGLDRFAARKQMVADLQEQGFLVEIKPHTLMTPKGDRTGSVIEPMLTSQWFVAMSATPNGGEPDNEFKGLSLADKAKKAVDSGAVRFIPENWVNTYNQWMNNIQDWCISRQLWWGHQIPAWYDEAGNVYVARNQAEAEKQAGKTGLTREEDVLDTWFSSALVPFSTLGWPSETDELKAFLPSNVLVTGYEIIFFWVARMIMMTTHFTGKVPFKAVYIHGIVRDHEGKKMSKSEGNVIDPVDLIDGIGLDKLLMKRTTGLRKPETAPKVEEATKKLFPEGIPSMGADALRFTMASYASLGRSVNFDFKRAEGYRNFCNKIWNATNFVLMNTENQDCGYGATAAEPRGHSFPDMWIIGRLNQTIEQVTQAYETYRFDLAAETLYSFVWNDYCDWYLELAKVQLQTGCASRQRATRHTLLRVLEAALRLLHPIIPFITEELWQTVAPMCDAKTADSIMLARFPETDGGEIVQTAFGQMTVLQDLIGAVRNLRGETGIQPNVKAPLFVESADDLADYLKYLPMMTRLTEARQVAALPESGDAPVAVCNGARLMLKVEIDKAAETARLSKEAEKLQKALDKLNAKLSKPGYTEKAPAHLVEKDKADLAELEDKMAKVQNQLAKLKD.

Residues 42–52 carry the 'HIGH' region motif; the sequence is PNVTGTLHMGH. The short motif at 552 to 556 is the 'KMSKS' region element; that stretch reads KMSKS. Lysine 555 contributes to the ATP binding site. Residues 879–945 are a coiled coil; the sequence is DKAAETARLS…VQNQLAKLKD (67 aa).

This sequence belongs to the class-I aminoacyl-tRNA synthetase family. ValS type 1 subfamily. Monomer.

It localises to the cytoplasm. It carries out the reaction tRNA(Val) + L-valine + ATP = L-valyl-tRNA(Val) + AMP + diphosphate. Catalyzes the attachment of valine to tRNA(Val). As ValRS can inadvertently accommodate and process structurally similar amino acids such as threonine, to avoid such errors, it has a 'posttransfer' editing activity that hydrolyzes mischarged Thr-tRNA(Val) in a tRNA-dependent manner. This is Valine--tRNA ligase from Neisseria gonorrhoeae (strain ATCC 700825 / FA 1090).